The chain runs to 497 residues: MPTKFEFSFSKSHRPAGGVAVLLQAAGAKEAAGAAVADPESVLAKAAKIGKFTGKALSTLDVIAPHGSPADRIVLLGVGHAAGMGDHDWLKAGGAAAAKLRSAEKITVFLDAPGIEVTGKAAADFALGMEMNAYSFESYKTRKSDDEPKTTQKPVKVTIVTATVIAAKKAFGTAQAVGEGVFLARDLVNEPANVLGPVEFAARAKELEKLGVEVEILTEREMKKLGMGALLGVAQGSSRPPRLVVMQWKGGKAKDKSVAFIGKGVVFDTGGISIKPASGMEDMKGDMGGAAAVTGLMHVLAARKAAVNAIGIIGLVENMPDGSAQRPGDIVTSMSGQTIEVINTDAEGRLVLGDALWYCNDRFKPQLMIDLATLTGAIMVALSNHYAGLFSNDDRLAEQLLAAGLVTQERLWRMPLGKEYDKMIDSKFADMKNTGGRHGGSVTAAQFLKRFVKDTPWAHLDIAGTAMGSPTDELNQSWGSGFGVRLLDQLVRANYES.

Mn(2+) contacts are provided by Lys-263 and Asp-268. Lys-275 is a catalytic residue. Mn(2+) contacts are provided by Asp-286, Asp-345, and Glu-347. The active site involves Arg-349.

It belongs to the peptidase M17 family. It depends on Mn(2+) as a cofactor.

The protein resides in the cytoplasm. It catalyses the reaction Release of an N-terminal amino acid, Xaa-|-Yaa-, in which Xaa is preferably Leu, but may be other amino acids including Pro although not Arg or Lys, and Yaa may be Pro. Amino acid amides and methyl esters are also readily hydrolyzed, but rates on arylamides are exceedingly low.. The catalysed reaction is Release of an N-terminal amino acid, preferentially leucine, but not glutamic or aspartic acids.. Functionally, presumably involved in the processing and regular turnover of intracellular proteins. Catalyzes the removal of unsubstituted N-terminal amino acids from various peptides. The protein is Probable cytosol aminopeptidase of Sinorhizobium medicae (strain WSM419) (Ensifer medicae).